Here is a 309-residue protein sequence, read N- to C-terminus: Olfactory receptor 1A1 (309 aa).

Residues 1 to 25 (MRENNQSSTLEFILLGVTGQQEQED) are Extracellular-facing. The N-linked (GlcNAc...) asparagine glycan is linked to asparagine 5. A helical transmembrane segment spans residues 26-49 (FFYILFLFIYPITLIGNLLIVLAI). At 50 to 57 (CSDVHLHN) the chain is on the cytoplasmic side. Residues 58–79 (PMYFLLANLSLVDIFFSSVTIP) traverse the membrane as a helical segment. Residues 80-100 (KMLANHLLGSKSISFGGCLTQ) are Extracellular-facing. Cysteine 97 and cysteine 189 form a disulfide bridge. A helical membrane pass occupies residues 101–120 (MYFMIALGNTDSYILAAMAY). At 121–139 (DRAVAISRPLHYTTIMSPR) the chain is on the cytoplasmic side. Residues 140–158 (SCIWLIAGSWVIGNANALP) traverse the membrane as a helical segment. At 159-195 (HTLLTASLSFCGNQEVANFYCDITPLLKLSCSDIHFH) the chain is on the extracellular side. The helical transmembrane segment at 196 to 218 (VKMMYLGVGIFSVPLLCIIVSYI) threads the bilayer. Over 219–235 (RVFSTVFQVPSTKGVLK) the chain is Cytoplasmic. The chain crosses the membrane as a helical span at residues 236–258 (AFSTCGSHLTVVSLYYGTVMGMY). At 259–270 (FRPLTNYSLKDA) the chain is on the extracellular side. Asparagine 264 carries an N-linked (GlcNAc...) asparagine glycan. A helical transmembrane segment spans residues 271–290 (VITVMYTAVTPMLNPFIYSL). The Cytoplasmic portion of the chain corresponds to 291–309 (RNRDVKAALRKLFNKRISS).

This sequence belongs to the G-protein coupled receptor 1 family.

It localises to the cell membrane. In terms of biological role, odorant receptor. The chain is Olfactory receptor 1A1 (OR1A1) from Pan troglodytes (Chimpanzee).